A 277-amino-acid chain; its full sequence is Putative hydroxypyruvate isomerase (277 aa).

Catalysis depends on proton donor/acceptor residues Glu-150 and Glu-249.

This sequence belongs to the hyi family.

The catalysed reaction is 3-hydroxypyruvate = 2-hydroxy-3-oxopropanoate. Catalyzes the reversible isomerization between hydroxypyruvate and 2-hydroxy-3-oxopropanoate (also termed tartronate semialdehyde). The chain is Putative hydroxypyruvate isomerase (HYI) from Homo sapiens (Human).